We begin with the raw amino-acid sequence, 454 residues long: uncharacterized protein (454 aa).

[4Fe-4S] cluster-binding residues include cysteine 73, cysteine 79, cysteine 82, and cysteine 154. S-adenosyl-L-methionine contacts are provided by glutamine 279, phenylalanine 307, aspartate 328, and aspartate 381. Cysteine 408 functions as the Nucleophile in the catalytic mechanism.

This sequence belongs to the class I-like SAM-binding methyltransferase superfamily. RNA M5U methyltransferase family.

This is an uncharacterized protein from Leptospira interrogans serogroup Icterohaemorrhagiae serovar Lai (strain 56601).